The sequence spans 282 residues: Transmembrane protein 41B (282 aa).

The segment at 1-36 (MAKKRAGNRETESSPLVEQEPRPSKETPVPKGAQSP) is disordered. Helical transmembrane passes span 43-63 (MSILLLVVIFACSACVMYLVF), 102-122 (TQVLLAYFATYIFLQTFAIPG), 138-160 (LALFLVCLCSGLGASFCYMLSYL), 188-208 (LINYIIFLRITPFLPNWFINI), 216-236 (PLGVFFLGTFLGVAPPSFVAI), and 251-271 (AVSWNSLLVLGVLAVVSILPV). The tract at residues 131-242 (GYLYPFPLAL…FVAINAGTTL (112 aa)) is VTT domain; required for its function in autophagy.

The protein belongs to the TMEM41 family.

It localises to the endoplasmic reticulum membrane. The protein localises to the endomembrane system. The enzyme catalyses a 1,2-diacyl-sn-glycero-3-phospho-L-serine(in) = a 1,2-diacyl-sn-glycero-3-phospho-L-serine(out). It catalyses the reaction cholesterol(in) = cholesterol(out). The catalysed reaction is a 1,2-diacyl-sn-glycero-3-phosphocholine(in) = a 1,2-diacyl-sn-glycero-3-phosphocholine(out). It carries out the reaction a 1,2-diacyl-sn-glycero-3-phosphoethanolamine(in) = a 1,2-diacyl-sn-glycero-3-phosphoethanolamine(out). In terms of biological role, phospholipid scramblase involved in lipid homeostasis and membrane dynamics processes. Has phospholipid scramblase activity toward cholesterol and phosphatidylserine, as well as phosphatidylethanolamine and phosphatidylcholine. Required for autophagosome formation: participates in early stages of autophagosome biogenesis at the endoplasmic reticulum (ER) membrane by reequilibrating the leaflets of the ER as lipids are extracted by atg2 (atg2a or atg2b) to mediate autophagosome assembly. In addition to autophagy, involved in other processes in which phospholipid scramblase activity is required. Required for normal motor neuron development. The protein is Transmembrane protein 41B of Danio rerio (Zebrafish).